The sequence spans 591 residues: Oxaloacetate decarboxylase alpha chain (591 aa).

A Pyruvate carboxyltransferase domain is found at 3–263; sequence IAITDVVLRD…DTGLDILKLE (261 aa). Residues 518 to 591 form the Biotinyl-binding domain; it reads PAGAGTPVTA…SVGDTLMTLA (74 aa). K557 carries the N6-biotinyllysine modification.

In terms of assembly, composed of three chains (alpha, beta, and gamma). Requires biotin as cofactor.

The enzyme catalyses oxaloacetate + 2 Na(+)(in) + H(+) = pyruvate + 2 Na(+)(out) + CO2. Functionally, catalyzes the decarboxylation of oxaloacetate coupled to Na(+) translocation. The protein is Oxaloacetate decarboxylase alpha chain (oadA1) of Salmonella typhimurium (strain LT2 / SGSC1412 / ATCC 700720).